We begin with the raw amino-acid sequence, 351 residues long: DNA polymerase IV (351 aa).

In terms of domain architecture, UmuC spans 4–185 (IIHVDMDCFF…LPLGKIPGVG (182 aa)). Residues aspartate 8 and aspartate 103 each contribute to the Mg(2+) site. Glutamate 104 is an active-site residue.

It belongs to the DNA polymerase type-Y family. Monomer. The cofactor is Mg(2+).

Its subcellular location is the cytoplasm. It catalyses the reaction DNA(n) + a 2'-deoxyribonucleoside 5'-triphosphate = DNA(n+1) + diphosphate. Functionally, poorly processive, error-prone DNA polymerase involved in untargeted mutagenesis. Copies undamaged DNA at stalled replication forks, which arise in vivo from mismatched or misaligned primer ends. These misaligned primers can be extended by PolIV. Exhibits no 3'-5' exonuclease (proofreading) activity. May be involved in translesional synthesis, in conjunction with the beta clamp from PolIII. The chain is DNA polymerase IV from Cronobacter sakazakii (strain ATCC BAA-894) (Enterobacter sakazakii).